A 103-amino-acid chain; its full sequence is Large ribosomal subunit protein uL24 (103 aa).

Belongs to the universal ribosomal protein uL24 family. Part of the 50S ribosomal subunit.

One of two assembly initiator proteins, it binds directly to the 5'-end of the 23S rRNA, where it nucleates assembly of the 50S subunit. Its function is as follows. One of the proteins that surrounds the polypeptide exit tunnel on the outside of the subunit. In Rhizobium meliloti (strain 1021) (Ensifer meliloti), this protein is Large ribosomal subunit protein uL24.